The chain runs to 305 residues: RNA-binding protein with serine-rich domain 1 (305 aa).

Positions 1 to 10 are enriched in basic residues; that stretch reads MDLSGVKKKS. Residues 1 to 161 are necessary for interaction with SRP54, nuclear localization and exon-skipping; sequence MDLSGVKKKS…KRRSPSPKPT (161 aa). Positions 1 to 170 are disordered; the sequence is MDLSGVKKKS…TKVHIGRLTR (170 aa). A necessary for interaction with the cleaved p110 isoform of CDC2L1 region spans residues 1 to 220; that stretch reads MDLSGVKKKS…ENPDEAEKAL (220 aa). Glycyl lysine isopeptide (Lys-Gly) (interchain with G-Cter in SUMO2) cross-links involve residues lysine 7 and lysine 15. Residues 33–59 are compositionally biased toward basic and acidic residues; the sequence is DRSDEKSKDRSKDKGTTKESSEKDRGR. Serine 53 carries the phosphoserine modification. Residues 68 to 126 show a composition bias toward low complexity; that stretch reads ASSGSSSTRSRSSSTSSSGSSTSTGSSSGSSSSSASSRSGSSSTSRSSSSSSSSGSPSP. Positions 69-121 are necessary for interactions with UPF2 and UPF3B and UPF2-dependent NMD; sequence SSGSSSTRSRSSSTSSSGSSTSTGSSSGSSSSSASSRSGSSSTSRSSSSSSSS. 2 stretches are compositionally biased toward basic residues: residues 127-143 and 151-167; these read SRRR…KSKP and RKRR…HIGR. Phosphoserine is present on residues serine 155 and serine 157. The tract at residues 156–242 is necessary for interaction with PNN and exon-skipping; sequence PSPKPTKVHI…ITATAVLAPW (87 aa). The tract at residues 159–244 is interaction with SAP18 and ACIN1; the sequence is KPTKVHIGRL…ATAVLAPWPR (86 aa). Phosphothreonine is present on threonine 161. Residues 161 to 240 enclose the RRM domain; that stretch reads TKVHIGRLTR…QEITATAVLA (80 aa). Lysine 218 bears the N6-acetyllysine mark. The tract at residues 238-305 is necessary for interaction with TRA2B, nuclear localization and exon-skipping; it reads VLAPWPRPPP…RSRSSSNSSR (68 aa). The tract at residues 240–305 is disordered; the sequence is APWPRPPPRR…RSRSSSNSSR (66 aa). The span at 242–262 shows a compositional bias: pro residues; that stretch reads WPRPPPRRFSPPRRMLPPPPM. Residues 266 to 298 show a composition bias toward basic residues; that stretch reads SPPRMRRRSRSPRRRSPVRRRSRSPGRRRHRSR.

Belongs to the splicing factor SR family. As to quaternary structure, found in mRNA splicing-dependent exon junction complexes (EJC). Found in a post-splicing complex with NXF1, RBM8A, UPF1, UPF2, UPF3A, UPF3B and RNPS1. Component of the heterotrimeric ASAP (apoptosis- and splicing-associated protein) and PSAP complexes consisting of RNPS1, SAP18 and either ACIN1 or PNN, respectively; the ASAP and PSAP complexes probably are formed mutually exclusive. Component of the active spliceosome. Associates with polysomes. Interacts with the cleaved p110 isoform of CDC2L1, CSNK2A1, PNN, SART3, SRP54, SRRM1 and TRA2B/SFRS10. In terms of processing, phosphorylated on one or more of the four Ser/Thr residues (Ser-43, Thr-49, Ser-52 or Ser-53). Ser-53 phosphorylation site is important for splicing and translation stimulation activity in vitro.

It localises to the nucleus. Its subcellular location is the nucleus speckle. The protein localises to the cytoplasm. Its function is as follows. Part of pre- and post-splicing multiprotein mRNP complexes. Auxiliary component of the splicing-dependent multiprotein exon junction complex (EJC) deposited at splice junction on mRNAs. The EJC is a dynamic structure consisting of core proteins and several peripheral nuclear and cytoplasmic associated factors that join the complex only transiently either during EJC assembly or during subsequent mRNA metabolism. Component of the ASAP and PSAP complexes which bind RNA in a sequence-independent manner and are proposed to be recruited to the EJC prior to or during the splicing process and to regulate specific excision of introns in specific transcription subsets. The ASAP complex can inhibit RNA processing during in vitro splicing reactions. The ASAP complex promotes apoptosis and is disassembled after induction of apoptosis. Enhances the formation of the ATP-dependent A complex of the spliceosome. Involved in both constitutive splicing and, in association with SRP54 and TRA2B/SFRS10, in distinctive modulation of alternative splicing in a substrate-dependent manner. Involved in the splicing modulation of BCL2L1/Bcl-X (and probably other apoptotic genes); specifically inhibits formation of proapoptotic isoforms such as Bcl-X(S); the activity is different from the established EJC assembly and function. Participates in mRNA 3'-end cleavage. Involved in UPF2-dependent nonsense-mediated decay (NMD) of mRNAs containing premature stop codons. Also mediates increase of mRNA abundance and translational efficiency. Binds spliced mRNA 20-25 nt upstream of exon-exon junctions. The chain is RNA-binding protein with serine-rich domain 1 (Rnps1) from Rattus norvegicus (Rat).